Reading from the N-terminus, the 543-residue chain is Bifunctional riboflavin biosynthesis protein RIBA 1, chloroplastic (543 aa).

The transit peptide at 1 to 56 (MSSINLSSSSPSTISLSRSRLSQSSTTLLHGLHRVTLPSNHPLSTFSIKTNTGKVK) directs the protein to the chloroplast. Positions 57 to 328 (AAVISREDDL…IADLIRYRRK (272 aa)) are DHBP synthase. Residues 152-153 (RE), Asp157, 267-271 (RAGHT), and Glu291 contribute to the D-ribulose 5-phosphate site. Glu153 contacts Mg(2+). His270 serves as a coordination point for Mg(2+). The interval 329-543 (RDKLVERASA…VEKIESESES (215 aa)) is GTP cyclohydrolase II. 379 to 383 (RVHSE) contributes to the GTP binding site. Zn(2+)-binding residues include Cys384, Cys395, and Cys397. Residues Gln400, 423-425 (EGR), and Thr445 each bind GTP. Residue Asp457 is the Proton acceptor; for GTP cyclohydrolase activity of the active site. Arg459 (nucleophile; for GTP cyclohydrolase activity) is an active-site residue. GTP contacts are provided by Thr480 and Lys485.

It in the N-terminal section; belongs to the DHBP synthase family. In the C-terminal section; belongs to the GTP cyclohydrolase II family. Requires Mg(2+) as cofactor. The cofactor is Mn(2+). It depends on Zn(2+) as a cofactor. In terms of tissue distribution, expressed in leaves, shoots, roots, flowers and siliques.

It is found in the plastid. It localises to the chloroplast. The catalysed reaction is D-ribulose 5-phosphate = (2S)-2-hydroxy-3-oxobutyl phosphate + formate + H(+). It catalyses the reaction GTP + 4 H2O = 2,5-diamino-6-hydroxy-4-(5-phosphoribosylamino)-pyrimidine + formate + 2 phosphate + 3 H(+). Its pathway is cofactor biosynthesis; riboflavin biosynthesis; 2-hydroxy-3-oxobutyl phosphate from D-ribulose 5-phosphate: step 1/1. It participates in cofactor biosynthesis; riboflavin biosynthesis; 5-amino-6-(D-ribitylamino)uracil from GTP: step 1/4. Functionally, involved in riboflavin biosynthesis. Catalyzes both the conversion of D-ribulose 5-phosphate to formate and 3,4-dihydroxy-2-butanone 4-phosphate and the conversion of GTP to 2,5-diamino-6-ribosylamino-4(3H)-pyrimidinone 5'-phosphate (DARP), formate and pyrophosphate. RIBA2 and RIBA3 together are not able to complement the loss of function of RIBA1. In Arabidopsis thaliana (Mouse-ear cress), this protein is Bifunctional riboflavin biosynthesis protein RIBA 1, chloroplastic (RIBA1).